A 190-amino-acid chain; its full sequence is Threonylcarbamoyl-AMP synthase (190 aa).

The 184-residue stretch at 7-190 folds into the YrdC-like domain; the sequence is GDAIAAAIDV…ALTGELFRQG (184 aa).

Belongs to the SUA5 family. TsaC subfamily.

It is found in the cytoplasm. It catalyses the reaction L-threonine + hydrogencarbonate + ATP = L-threonylcarbamoyladenylate + diphosphate + H2O. Required for the formation of a threonylcarbamoyl group on adenosine at position 37 (t(6)A37) in tRNAs that read codons beginning with adenine. Catalyzes the conversion of L-threonine, HCO(3)(-)/CO(2) and ATP to give threonylcarbamoyl-AMP (TC-AMP) as the acyladenylate intermediate, with the release of diphosphate. The sequence is that of Threonylcarbamoyl-AMP synthase from Shigella flexneri.